An 89-amino-acid polypeptide reads, in one-letter code: uncharacterized protein (89 aa).

This sequence to Rhizobium NGR234A y4oN.

This is an uncharacterized protein from Sinorhizobium fredii (strain NBRC 101917 / NGR234).